Here is a 206-residue protein sequence, read N- to C-terminus: Cytochrome c oxidase subunit 3 (206 aa).

The next 5 helical transmembrane spans lie at 26–46, 68–88, 97–117, 143–163, and 185–205; these read FLGF…FFGT, LVFI…LAMF, AMMI…GFEI, LVGL…VLLI, and WHFI…MGVG.

This sequence belongs to the cytochrome c oxidase subunit 3 family.

It localises to the cell membrane. It catalyses the reaction 4 Fe(II)-[cytochrome c] + O2 + 8 H(+)(in) = 4 Fe(III)-[cytochrome c] + 2 H2O + 4 H(+)(out). This is Cytochrome c oxidase subunit 3 (ctaE) from Alkalihalophilus pseudofirmus (strain ATCC BAA-2126 / JCM 17055 / OF4) (Bacillus pseudofirmus).